Reading from the N-terminus, the 65-residue chain is SPbeta prophage-derived uncharacterized protein YopU (65 aa).

The protein is SPbeta prophage-derived uncharacterized protein YopU (yopU) of Bacillus subtilis (strain 168).